A 507-amino-acid chain; its full sequence is Maturase K (507 aa).

Belongs to the intron maturase 2 family. MatK subfamily.

Its subcellular location is the plastid. It localises to the chloroplast. Functionally, usually encoded in the trnK tRNA gene intron. Probably assists in splicing its own and other chloroplast group II introns. This Craterostigma plantagineum (Blue gem) protein is Maturase K.